We begin with the raw amino-acid sequence, 110 residues long: Insulin-2 (110 aa).

The first 24 residues, 1–24 (MALWMRFLPLLALLFLWESHPTQA), serve as a signal peptide directing secretion. 3 cysteine pairs are disulfide-bonded: C31–C96, C43–C109, and C95–C100. A propeptide spans 57–87 (EVEDPQVAQLELGGGPGAGDLQTLALEVAQQ) (c peptide).

The protein belongs to the insulin family. Heterodimer of a B chain and an A chain linked by two disulfide bonds.

Its subcellular location is the secreted. Functionally, insulin decreases blood glucose concentration. It increases cell permeability to monosaccharides, amino acids and fatty acids. It accelerates glycolysis, the pentose phosphate cycle, and glycogen synthesis in liver. The polypeptide is Insulin-2 (Ins2) (Mus musculus (Mouse)).